The primary structure comprises 276 residues: Putative translation initiation factor eIF-2B subunit 2-like (276 aa).

This sequence belongs to the eIF-2B alpha/beta/delta subunits family. As to quaternary structure, complex of two different subunits.

Catalyzes the exchange of initiation factor 2-bound GDP for GTP. The chain is Putative translation initiation factor eIF-2B subunit 2-like from Pyrococcus furiosus (strain ATCC 43587 / DSM 3638 / JCM 8422 / Vc1).